Consider the following 486-residue polypeptide: Odorant receptor coreceptor (486 aa).

Residues 1–47 are Cytoplasmic-facing; the sequence is MTTSMQPSKYTGLVADLMPNIRAMKYSGLFMHNFTGGSAFMKKVYSS. Residues 48–68 traverse the membrane as a helical segment; that stretch reads VHLVFLLMQFTFILVNMALNA. The Extracellular portion of the chain corresponds to 69–75; it reads EEVNELS. The chain crosses the membrane as a helical span at residues 76-96; the sequence is GNTITTLFFTHCITKFIYLAV. Over 97–135 the chain is Cytoplasmic; it reads NQKNFYRTLNIWNQVNTHPLFAESDARYHSIALAKMRKL. Residues 136–156 form a helical membrane-spanning segment; that stretch reads FFLVMLTTVASATAWTTITFF. At 157-191 the chain is on the extracellular side; the sequence is GDSVKMVVDHETNSSIPVEIPRLPIKSFYPWNASH. 2 N-linked (GlcNAc...) asparagine glycosylation sites follow: asparagine 169 and asparagine 188. A helical membrane pass occupies residues 192–212; sequence GMFYMISFAFQIYYVLFSMIH. At 213-351 the chain is on the cytoplasmic side; sequence SNLCDVMFCS…VERHKHVVRL (139 aa). The chain crosses the membrane as a helical span at residues 352–372; the sequence is VAAIGDTYGAALLLHMLTSTI. Residues 373 to 390 are Extracellular-facing; sequence KLTLLAYQATKINGVNVY. The helical transmembrane segment at 391 to 411 threads the bilayer; sequence AFTVVGYLGYALAQVFHFCIF. Residues 412–462 lie on the Cytoplasmic side of the membrane; the sequence is GNRLIEESSSVMEAAYSCHWYDGSEEAKTFVQIVCQQCQKAMSISGAKFFT. The helical transmembrane segment at 463 to 483 threads the bilayer; that stretch reads VSLDLFASVLGAVVTYFMVLV. Residues 484 to 486 lie on the Extracellular side of the membrane; the sequence is QLK.

Belongs to the insect chemoreceptor superfamily. Heteromeric odorant receptor channel (TC 1.A.69) family. Orco subfamily. In terms of assembly, heterodimer with conventional odorant receptors (ORs). Complexes exist early in the endomembrane system in olfactory sensory neurons (OSNs), coupling these complexes to the conserved ciliary trafficking pathway. As to expression, expression is restricted to olfactory sensory neurons (OSNs). Coexpressed with Snmp in a lateral-distal population of OSNs. Expressed in the embryonic antennal-maxillary complex, in all 21 OSNs of the larval dorsal organ, in the pupal antennal OSNs, in all 120 adult maxillary palp neurons and in approximately 70-80% of adult antennal OSNs, where expression is highest at the dorsal-medial edge. Localized to OSN cell bodies and to the distal portion of ciliated OSN dendrites.

It is found in the cell membrane. Odorant coreceptor which complexes with conventional odorant receptors (ORs) to form odorant-sensing units, providing sensitive and prolonged odorant signaling and calcium permeability. Orco is a universal and integral part of the functional odorant receptor, involved in the dendritic localization of other olfactory receptors. Expression of Orco alone leads to formation of rapid and transient ion channels not directly responding to odorants, but directly activated by intracellular cAMP or cGMP. Snmp, Or67d and lush act in concert to capture fatty-acid-derived male pheromone 11-cis vaccenyl acetate (cVA) molecules on the surface of Or67d expressing olfactory dendrites and facilitate their transfer to the odorant-receptor Orco complex. This chain is Odorant receptor coreceptor (Orco), found in Drosophila melanogaster (Fruit fly).